Consider the following 1031-residue polypeptide: Protein draper (1031 aa).

The N-terminal stretch at 1-16 is a signal peptide; that stretch reads MLPVILIACLAQLVLA. At 17 to 800 the chain is on the extracellular side; that stretch reads QADLKDLDGP…DQSENSSRAS (784 aa). Residues 25–100 enclose the EMI domain; that stretch reads GPNICKRREL…YIASAGECVP (76 aa). Intrachain disulfides connect Cys29-Cys88, Cys55-Cys62, Cys87-Cys98, Cys102-Cys111, Cys106-Cys117, and Cys119-Cys128. The N-linked (GlcNAc...) asparagine glycan is linked to Asn73. EGF-like domains follow at residues 99 to 129, 137 to 172, 180 to 215, 223 to 258, 266 to 301, and 309 to 344; these read VPHC…PACD, YGRN…ARCA, FGAN…PLCD, HGAQ…DVCA, YGPG…ERCF, and YGFN…AKCA. Asn140 carries an N-linked (GlcNAc...) asparagine glycan. 3 cysteine pairs are disulfide-bonded: Cys141/Cys153, Cys147/Cys160, and Cys162/Cys171. N-linked (GlcNAc...) asparagine glycosylation is present at Asn183. Disulfide bonds link Cys184–Cys196, Cys190–Cys203, Cys205–Cys214, Cys227–Cys239, Cys233–Cys246, Cys248–Cys257, Cys270–Cys282, Cys276–Cys289, and Cys291–Cys300. Asn312 carries N-linked (GlcNAc...) asparagine glycosylation. 3 disulfides stabilise this stretch: Cys313–Cys325, Cys319–Cys332, and Cys334–Cys343. N-linked (GlcNAc...) asparagine glycosylation occurs at Asn329. Asn358 carries N-linked (GlcNAc...) asparagine glycosylation. 2 EGF-like domains span residues 398–433 and 484–519; these read YGPN…PTCE and FGQD…ERCE. Cystine bridges form between Cys402/Cys414, Cys408/Cys421, Cys423/Cys432, Cys488/Cys500, Cys494/Cys507, and Cys509/Cys518. Residue Asn418 is glycosylated (N-linked (GlcNAc...) asparagine). Asn504 is a glycosylation site (N-linked (GlcNAc...) asparagine). N-linked (GlcNAc...) asparagine glycosylation is found at Asn540, Asn584, and Asn585. In terms of domain architecture, EGF-like 9 spans 572 to 607; it reads YGENCDKVCRCLNNSSCDPDSGNCICSAGWTGADCA. Cystine bridges form between Cys576–Cys588, Cys582–Cys595, and Cys597–Cys606. Asn630 carries an N-linked (GlcNAc...) asparagine glycan. Residues 660–695 form the EGF-like 10 domain; it reads YGPGCKLKCNCEHGGECNHVTGQCQCLPGWTGSNCN. Intrachain disulfides connect Cys664–Cys676, Cys670–Cys683, and Cys685–Cys694. 2 N-linked (GlcNAc...) asparagine glycosylation sites follow: Asn695 and Asn795. The helical transmembrane segment at 801 to 821 threads the bilayer; it reads VALTLVLMTLFACIIFAVFIY. Topologically, residues 822 to 1031 are cytoplasmic; it reads YRRRVSNLKT…SPSSSPKFLK (210 aa). Over residues 940-954 the composition is skewed to basic and acidic residues; sequence KEGYKDPDEYDHLDY. 2 disordered regions span residues 940–964 and 989–1031; these read KEGY…QKPH and TVLL…KFLK. Over residues 1009–1031 the composition is skewed to polar residues; it reads DNTNTNLDNVSTASPSSSPKFLK.

This sequence belongs to the MEGF family. As to quaternary structure, interacts (via the cytoplasmic domain) with shark; this is required for the recruitment of drpr and glial cells to severed axons and for the phagocytosis of axonal debris by glial cells following axon injury. Interacts with ced-6. Interacts with csw; this results in dephosphorylation of drpr isoform A which is required for the inhibition of glial cell engulfment of axonal debris produced following axonal injury. Phosphorylated on tyrosine residues. Phosphorylation is induced by binding to prtp. It is also induced by binding to the membrane phospholipid phosphatidylserine. Phosphorylation may be mediated directly or indirectly by Src42a and is required for interaction with shark. In terms of processing, dephosphorylated by csw which is required for the inhibition of glial cell engulfment of axonal debris produced following axonal injury. Expressed in adult head (at protein level). Expressed in glia, macrophages and ectoderm (at protein level). Detected in glia around the mushroom body dorsal lobe and in glial processes infiltrating the medial lobe (at protein level). Expressed in adult brain glia including antennal lobe glia (at protein level). Expressed in the larval fat body (at protein level). Expressed in the ovary (at protein level). Isoform B: Predominant isoform in adult glia.

It localises to the cell membrane. The protein localises to the cell projection. Its subcellular location is the axon. The protein resides in the cytoplasm. It is found in the postsynaptic cell membrane. It localises to the cell cortex. The protein localises to the phagocytic cup. Its subcellular location is the cytoplasmic vesicle. The protein resides in the phagosome. Receptor which is involved in the phagocytosis of a variety of cells including apoptotic cells, severed and pruned axons, degenerating dendrites, salivary gland cells, germline cells and bacteria. Binds to the ligand prtp which relocates from the endoplasmic reticulum to the cell surface during apoptosis. Ligand-binding may promote tyrosine phosphorylation mediated by Src42a, interaction with shark and subsequent activation of phagocytosis. Also binds to the membrane phospholipid phosphatidylserine which is exposed on the surface of apoptotic cells. Required for the phagocytosis of apoptotic cells by macrophages. Also required for the phagocytosis of apoptotic neurons by glial cells in the embryonic nervous system. Acts downstream of NimC4/simu in the glial phagocytosis of apoptotic neurons. Plays a role in the glial engulfment of larval axons as part of programmed axon pruning during metamorphosis. Also mediates glial cell clearance of severed axons following axonal injury. Required for the engulfment of degenerating dendrites by epidermal cells. Required in the ovary for the engulfment and subsequent processing of dying germline cells by follicular epithelial cells through activation of the JNK/bsk pathway. Plays a role in neuromuscular junction development by mediating the clearance of presynaptic debris and immature boutons which are shed by growing synapses. Required for larval salivary gland cell death which occurs following a rise in steroid levels after puparium formation. Also involved in bacterial phagocytosis. Required for hemocyte phagocytosis of the Gram-positive bacterium S.aureus. Lipoteichoic acid, synthesized by the S.aureus lipoteichoic acid synthase ltaS, acts as a ligand for drpr in this process. Together with Src42a and shark, promotes the migration of macrophages to sites of wounding as part of a signaling cascade where Scr42a detects production of hydrogen peroxide at wound sites which triggers phosphorylation of drpr and subsequent recruitment and activation of shark. Also required for macrophage priming which occurs following phagocytosis of apoptotic cells and ensures that macrophages develop a form of molecular memory that allows them to later mount an inflammatory response to tissue damage and bacterial infection. Is also an essential factor in the regulation of muscle development and myogenesis, and as a consequence is required for normal locomotion. Likely to control the balance between skeletal muscle satellite cells proliferation and differentiation through regulation of the notch signaling pathway. Its function is as follows. Promotes engulfment of axonal debris by glial cells following axonal injury. Functionally, potently inhibits glial cell engulfment of axonal debris produced following axonal injury. This is Protein draper from Drosophila melanogaster (Fruit fly).